The following is a 30-amino-acid chain: NLYQFKNMIHCTVPSRPWWHFADYGCYCGR.

Belongs to the phospholipase A2 family. Group I subfamily. It depends on Ca(2+) as a cofactor. Expressed by the venom gland.

It is found in the secreted. The catalysed reaction is a 1,2-diacyl-sn-glycero-3-phosphocholine + H2O = a 1-acyl-sn-glycero-3-phosphocholine + a fatty acid + H(+). Functionally, snake venom phospholipase A2 (PLA2) that shows weak anticoagulant activity. Is more catalytically active than the strong anticoagulant protein CM-IV found in this venom. Acts by inhibiting the complex composed of tissue factor (F3) and coagulation factor VIIa (F7) (TF-VIIa complex) by only enzymatic mechanism. PLA2 catalyzes the calcium-dependent hydrolysis of the 2-acyl groups in 3-sn-phosphoglycerides. The protein is Basic phospholipase A2 CM-I of Naja nigricollis (Black-necked spitting cobra).